The sequence spans 150 residues: MRVVVQRVRAASVAVDGDIVGKIGTGLLVLAGFEEADSETDLDWMAGKIVRLRLFADESGVMNRNVLDAGGEVLAVSQFTLYASVKKGNRPSWSRAARGEVSQPLFERFVTKLSATLGKAVPTGVFGADMQVSLINDGPVTLTIDSKVPE.

Residues 138–139 (GP) carry the Gly-cisPro motif, important for rejection of L-amino acids motif.

It belongs to the DTD family. As to quaternary structure, homodimer.

It localises to the cytoplasm. It carries out the reaction glycyl-tRNA(Ala) + H2O = tRNA(Ala) + glycine + H(+). It catalyses the reaction a D-aminoacyl-tRNA + H2O = a tRNA + a D-alpha-amino acid + H(+). Functionally, an aminoacyl-tRNA editing enzyme that deacylates mischarged D-aminoacyl-tRNAs. Also deacylates mischarged glycyl-tRNA(Ala), protecting cells against glycine mischarging by AlaRS. Acts via tRNA-based rather than protein-based catalysis; rejects L-amino acids rather than detecting D-amino acids in the active site. By recycling D-aminoacyl-tRNA to D-amino acids and free tRNA molecules, this enzyme counteracts the toxicity associated with the formation of D-aminoacyl-tRNA entities in vivo and helps enforce protein L-homochirality. In Dechloromonas aromatica (strain RCB), this protein is D-aminoacyl-tRNA deacylase.